The following is a 101-amino-acid chain: MQLRYFLLLAAALFCIGIYGLITSRNAVRVLMSIELLLNAVNLNLMAFSNYLDSTLIKGQVFTVFVITVAAAEAAVGLAIVLAIYRNRDTVDMEQFNLLKW.

The next 3 membrane-spanning stretches (helical) occupy residues 3-23, 30-50, and 64-84; these read LRYF…GLIT, VLMS…AFSN, and VFVI…VLAI.

It belongs to the complex I subunit 4L family. As to quaternary structure, NDH-1 can be composed of about 15 different subunits; different subcomplexes with different compositions have been identified which probably have different functions.

The protein localises to the cellular thylakoid membrane. It catalyses the reaction a plastoquinone + NADH + (n+1) H(+)(in) = a plastoquinol + NAD(+) + n H(+)(out). It carries out the reaction a plastoquinone + NADPH + (n+1) H(+)(in) = a plastoquinol + NADP(+) + n H(+)(out). NDH-1 shuttles electrons from an unknown electron donor, via FMN and iron-sulfur (Fe-S) centers, to quinones in the respiratory and/or the photosynthetic chain. The immediate electron acceptor for the enzyme in this species is believed to be plastoquinone. Couples the redox reaction to proton translocation, and thus conserves the redox energy in a proton gradient. Cyanobacterial NDH-1 also plays a role in inorganic carbon-concentration. This is NAD(P)H-quinone oxidoreductase subunit 4L from Nostoc sp. (strain PCC 7120 / SAG 25.82 / UTEX 2576).